Reading from the N-terminus, the 427-residue chain is 3-phosphoshikimate 1-carboxyvinyltransferase (427 aa).

3-phosphoshikimate is bound by residues Lys22, Ser23, and Arg27. Lys22 contributes to the phosphoenolpyruvate binding site. Residues Gly96 and Arg124 each coordinate phosphoenolpyruvate. 7 residues coordinate 3-phosphoshikimate: Ser169, Ser170, Gln171, Ser197, Asp313, Asn336, and Lys340. Residue Gln171 coordinates phosphoenolpyruvate. Asp313 (proton acceptor) is an active-site residue. Residues Arg344, Arg386, and Lys411 each contribute to the phosphoenolpyruvate site.

The protein belongs to the EPSP synthase family. Monomer.

Its subcellular location is the cytoplasm. The enzyme catalyses 3-phosphoshikimate + phosphoenolpyruvate = 5-O-(1-carboxyvinyl)-3-phosphoshikimate + phosphate. The protein operates within metabolic intermediate biosynthesis; chorismate biosynthesis; chorismate from D-erythrose 4-phosphate and phosphoenolpyruvate: step 6/7. In terms of biological role, catalyzes the transfer of the enolpyruvyl moiety of phosphoenolpyruvate (PEP) to the 5-hydroxyl of shikimate-3-phosphate (S3P) to produce enolpyruvyl shikimate-3-phosphate and inorganic phosphate. This chain is 3-phosphoshikimate 1-carboxyvinyltransferase, found in Salmonella schwarzengrund (strain CVM19633).